The primary structure comprises 674 residues: Dymeclin (674 aa).

G2 is lipidated: N-myristoyl glycine.

The protein belongs to the dymeclin family. As to quaternary structure, interacts with GOLM1 and PPIB. Post-translationally, myristoylated in vitro; myristoylation is not essential for protein targeting to Golgi compartment.

The protein resides in the cytoplasm. Its subcellular location is the golgi apparatus. It localises to the membrane. Its function is as follows. Necessary for correct organization of Golgi apparatus. Involved in bone development. The polypeptide is Dymeclin (Dym) (Rattus norvegicus (Rat)).